The primary structure comprises 229 residues: MANHLQFNFQDATSPLMQELVKFHDHSLTILFFISALILYVLMMTSLSKLTNKNILDSQEIEMVWTVIPAFILIMLALPSIQILYLMDEIASPDITIKTVGHQWYWTYEFSDLSKESEIESYMLPTADLQNGDFRLLEVDNRISVPMDSKIRMLITSEDVLHAWTLPSMGIKVDAVPGRLNQVTFSSSLPGLFFGQCSEICGANHSFMPIAMEVIPLKTFESWIIKLSL.

Residues 1 to 14 lie on the Mitochondrial intermembrane side of the membrane; it reads MANHLQFNFQDATS. A helical membrane pass occupies residues 15-45; it reads PLMQELVKFHDHSLTILFFISALILYVLMMT. Over 46 to 59 the chain is Mitochondrial matrix; sequence SLSKLTNKNILDSQ. The helical transmembrane segment at 60 to 87 threads the bilayer; the sequence is EIEMVWTVIPAFILIMLALPSIQILYLM. The Mitochondrial intermembrane segment spans residues 88–229; it reads DEIASPDITI…FESWIIKLSL (142 aa). Cu cation is bound by residues H162, C197, E199, C201, H205, and M208. E199 is a Mg(2+) binding site.

This sequence belongs to the cytochrome c oxidase subunit 2 family. Component of the cytochrome c oxidase (complex IV, CIV), a multisubunit enzyme composed of 14 subunits. The complex is composed of a catalytic core of 3 subunits MT-CO1, MT-CO2 and MT-CO3, encoded in the mitochondrial DNA, and 11 supernumerary subunits COX4I, COX5A, COX5B, COX6A, COX6B, COX6C, COX7A, COX7B, COX7C, COX8 and NDUFA4, which are encoded in the nuclear genome. The complex exists as a monomer or a dimer and forms supercomplexes (SCs) in the inner mitochondrial membrane with NADH-ubiquinone oxidoreductase (complex I, CI) and ubiquinol-cytochrome c oxidoreductase (cytochrome b-c1 complex, complex III, CIII), resulting in different assemblies (supercomplex SCI(1)III(2)IV(1) and megacomplex MCI(2)III(2)IV(2)). Found in a complex with TMEM177, COA6, COX18, COX20, SCO1 and SCO2. Interacts with TMEM177 in a COX20-dependent manner. Interacts with COX20. Interacts with COX16. Cu cation serves as cofactor.

Its subcellular location is the mitochondrion inner membrane. It catalyses the reaction 4 Fe(II)-[cytochrome c] + O2 + 8 H(+)(in) = 4 Fe(III)-[cytochrome c] + 2 H2O + 4 H(+)(out). In terms of biological role, component of the cytochrome c oxidase, the last enzyme in the mitochondrial electron transport chain which drives oxidative phosphorylation. The respiratory chain contains 3 multisubunit complexes succinate dehydrogenase (complex II, CII), ubiquinol-cytochrome c oxidoreductase (cytochrome b-c1 complex, complex III, CIII) and cytochrome c oxidase (complex IV, CIV), that cooperate to transfer electrons derived from NADH and succinate to molecular oxygen, creating an electrochemical gradient over the inner membrane that drives transmembrane transport and the ATP synthase. Cytochrome c oxidase is the component of the respiratory chain that catalyzes the reduction of oxygen to water. Electrons originating from reduced cytochrome c in the intermembrane space (IMS) are transferred via the dinuclear copper A center (CU(A)) of subunit 2 and heme A of subunit 1 to the active site in subunit 1, a binuclear center (BNC) formed by heme A3 and copper B (CU(B)). The BNC reduces molecular oxygen to 2 water molecules using 4 electrons from cytochrome c in the IMS and 4 protons from the mitochondrial matrix. This is Cytochrome c oxidase subunit 2 (MT-CO2) from Myxine glutinosa (Atlantic hagfish).